Here is a 319-residue protein sequence, read N- to C-terminus: Acetyl-coenzyme A carboxylase carboxyl transferase subunit alpha (319 aa).

The 255-residue stretch at 39 to 293 folds into the CoA carboxyltransferase C-terminal domain; that stretch reads RLQKKSNDLT…KAVLEKQLHE (255 aa).

The protein belongs to the AccA family. As to quaternary structure, acetyl-CoA carboxylase is a heterohexamer composed of biotin carboxyl carrier protein (AccB), biotin carboxylase (AccC) and two subunits each of ACCase subunit alpha (AccA) and ACCase subunit beta (AccD).

It localises to the cytoplasm. The catalysed reaction is N(6)-carboxybiotinyl-L-lysyl-[protein] + acetyl-CoA = N(6)-biotinyl-L-lysyl-[protein] + malonyl-CoA. It participates in lipid metabolism; malonyl-CoA biosynthesis; malonyl-CoA from acetyl-CoA: step 1/1. Its function is as follows. Component of the acetyl coenzyme A carboxylase (ACC) complex. First, biotin carboxylase catalyzes the carboxylation of biotin on its carrier protein (BCCP) and then the CO(2) group is transferred by the carboxyltransferase to acetyl-CoA to form malonyl-CoA. In Neisseria meningitidis serogroup C (strain 053442), this protein is Acetyl-coenzyme A carboxylase carboxyl transferase subunit alpha.